A 60-amino-acid chain; its full sequence is Toxin FS-2 (60 aa).

Cystine bridges form between cysteine 3–cysteine 22, cysteine 17–cysteine 39, cysteine 41–cysteine 52, and cysteine 53–cysteine 58. An important for binding to L-type calcium channels region spans residues 41-48 (CPTAMWPY).

It belongs to the three-finger toxin family. Short-chain subfamily. L-type calcium blocker sub-subfamily. Expressed by the venom gland.

The protein resides in the secreted. Its function is as follows. Specific blocker of the voltage-dependent L-type calcium channel (Cav1/CACNA1). Inhibits cardiac contractions. The protein is Toxin FS-2 of Dendroaspis polylepis polylepis (Black mamba).